Consider the following 220-residue polypeptide: Large ribosomal subunit protein bL9 (220 aa).

The span at 167–184 (AAAEVEQAEDVAAAEQQD) shows a compositional bias: low complexity. The interval 167–220 (AAAEVEQAEDVAAAEQQDSSPVDDHADDADGVADGEGRDEGAGDASDEEEMPST) is disordered. Residues 211 to 220 (ASDEEEMPST) show a composition bias toward acidic residues.

It belongs to the bacterial ribosomal protein bL9 family.

Functionally, binds to the 23S rRNA. The sequence is that of Large ribosomal subunit protein bL9 from Anaplasma marginale (strain Florida).